Consider the following 244-residue polypeptide: uncharacterized protein (244 aa).

Composition is skewed to basic and acidic residues over residues 1-10 (MNDPFARMET) and 100-127 (GTRG…HGEE). Disordered stretches follow at residues 1-79 (MNDP…GEEL), 100-130 (GTRG…EPNY), and 219-244 (TGAS…EIKL).

This is an uncharacterized protein from Homo sapiens (Human).